The chain runs to 497 residues: Arginine/ornithine antiporter ArcD2 (497 aa).

13 helical membrane-spanning segments follow: residues 8–28, 41–61, 88–108, 127–147, 160–180, 220–240, 255–275, 297–317, 354–374, 378–398, 406–426, 429–449, and 462–482; these read GISLFALLAIIISGAIGGGVF, GGVVISWLFIGFGILMLVLSF, FLSGWGYWISAWTGTIGFAVL, SLTILSVIIVSIISWILMLLV, IVMIAKLIPLVVFSITGIILF, IKGSLMVMVWVFVGIEGATMM, VIGLAVLLVIYVLLSLLPYGY, VGGWGGSLMAVGLMISLLGAW, LLITQLMIQIFIIITYFVANA, FIYMATAVIMICYALVGAYLF, SVKNILIGFFTFAFQALALYL, WQYVWLAMILYTIGFLLFIGA, and WLGMLVVTVLGVLAIVVLICG.

The protein belongs to the amino acid-polyamine-organocation (APC) superfamily. Basic amino acid/polyamine antiporter (APA) (TC 2.A.3.2) family.

It is found in the cell membrane. The enzyme catalyses L-ornithine(in) + L-arginine(out) = L-ornithine(out) + L-arginine(in). In terms of biological role, catalyzes electroneutral exchange between L-arginine and L-ornithine. Can also efficiently translocate L-alanine. May function in vivo as a L-arginine/L-alanine exchanger in a pathway together with the arcT gene, which is found adjacent to the arcD2 gene in the ADI gene cluster. This chain is Arginine/ornithine antiporter ArcD2, found in Lactococcus lactis subsp. cremoris (strain MG1363).